Reading from the N-terminus, the 145-residue chain is Deoxyuridine 5'-triphosphate nucleotidohydrolase (145 aa).

Substrate-binding positions include 65–67 (RSG), N78, 82–84 (TID), and K92.

The protein belongs to the dUTPase family. Requires Mg(2+) as cofactor.

The enzyme catalyses dUTP + H2O = dUMP + diphosphate + H(+). It functions in the pathway pyrimidine metabolism; dUMP biosynthesis; dUMP from dCTP (dUTP route): step 2/2. In terms of biological role, this enzyme is involved in nucleotide metabolism: it produces dUMP, the immediate precursor of thymidine nucleotides and it decreases the intracellular concentration of dUTP so that uracil cannot be incorporated into DNA. The chain is Deoxyuridine 5'-triphosphate nucleotidohydrolase from Syntrophomonas wolfei subsp. wolfei (strain DSM 2245B / Goettingen).